The following is a 109-amino-acid chain: Cell division protein ZapA (109 aa).

A coiled-coil region spans residues 21–99 (PEQQEALNQA…IEQALLEQGK (79 aa)).

Belongs to the ZapA family. Type 1 subfamily. As to quaternary structure, homodimer. Interacts with FtsZ.

It is found in the cytoplasm. Activator of cell division through the inhibition of FtsZ GTPase activity, therefore promoting FtsZ assembly into bundles of protofilaments necessary for the formation of the division Z ring. It is recruited early at mid-cell but it is not essential for cell division. This Pectobacterium atrosepticum (strain SCRI 1043 / ATCC BAA-672) (Erwinia carotovora subsp. atroseptica) protein is Cell division protein ZapA.